Reading from the N-terminus, the 434-residue chain is MEHLTLGPLTRATGTVRLPGSKSISNRVLLLAALANGETRVRDLLDSDDTRVMLQALRTLGVAWRQDGPDYIVTGAGGNFPVKSAELFMGNAGTAIRPLTAALALQGGSYKLSGVPRMHERPIGDLVDGLRQVGAVIDYLGNEGFPPLHIQPASLRIDAPIRVRGDVSSQFLTALLMSLPLAQSASGRIEIEVVGELISKPYIEITLNLLARFGIEVERQGWERFILPAGTAYRSPGEIFVEGDASSASYFLAAGAIGGGPVRVEGVGMASIQGDVRFADALNRMGANVMAGDNWIEVRGTERDDGRLHGIELDCNHIPDAAMTLAVAALFAEGTTTLTNIASWRVKETDRIAAMATELRKLGAVVEEGADYLRVTPPQPWQTPADGIGTYDDHRMAMCFSLAAFGPLPVRINDPGCVAKTFPDYFSVFAGVTR.

3-phosphoshikimate is bound by residues Lys-22, Ser-23, and Arg-27. Phosphoenolpyruvate is bound at residue Lys-22. 2 residues coordinate phosphoenolpyruvate: Gly-93 and Arg-121. 3-phosphoshikimate-binding residues include Ser-168, Ser-169, Gln-170, Ser-199, Asp-320, and Lys-347. Phosphoenolpyruvate is bound at residue Gln-170. Asp-320 acts as the Proton acceptor in catalysis. Arg-351, Arg-395, and Lys-420 together coordinate phosphoenolpyruvate.

Belongs to the EPSP synthase family. As to quaternary structure, monomer.

The protein resides in the cytoplasm. It catalyses the reaction 3-phosphoshikimate + phosphoenolpyruvate = 5-O-(1-carboxyvinyl)-3-phosphoshikimate + phosphate. It participates in metabolic intermediate biosynthesis; chorismate biosynthesis; chorismate from D-erythrose 4-phosphate and phosphoenolpyruvate: step 6/7. Its function is as follows. Catalyzes the transfer of the enolpyruvyl moiety of phosphoenolpyruvate (PEP) to the 5-hydroxyl of shikimate-3-phosphate (S3P) to produce enolpyruvyl shikimate-3-phosphate and inorganic phosphate. This chain is 3-phosphoshikimate 1-carboxyvinyltransferase, found in Cupriavidus taiwanensis (strain DSM 17343 / BCRC 17206 / CCUG 44338 / CIP 107171 / LMG 19424 / R1) (Ralstonia taiwanensis (strain LMG 19424)).